Consider the following 388-residue polypeptide: MAVHAHPDDEALWTGGLLAHLSRRGADVRVVTCTLGEQGEVIGEPMQGLIADEADMLGGFRYRELEDSLRILGVNGVHHRPCVLGGVGCWRDSGMVGTPSADHPRAFVKSGQQAVDALKALMSEFCPDIVVTYGPDGGYGHPDHIRAHEITHAAVAELPHTSAPELGGDNTDLFSAVLARRHGGRETSADHGIPDPVVLWAVRGETALKQAGRAISRIPDGWVAPSGMDFSFVDGAAGAVDSASSEKTPDKITEPDLAFVPDDLVDLAVQLSDADIEAQANAMAAHATQLWIADGRQSWTNPESAWAVSDPTVAPKVFALSNRIAQPLMREEHYVVAYGGSGPWAKTTPARYAYDSSVVRARGRSAFSLDQADEGAAHDTSEQSGQRR.

Residues H6, D9, and H144 each contribute to the Zn(2+) site. The disordered stretch occupies residues 369–388; sequence LDQADEGAAHDTSEQSGQRR.

This sequence belongs to the MshB deacetylase family. Zn(2+) serves as cofactor.

It catalyses the reaction 1D-myo-inositol 2-acetamido-2-deoxy-alpha-D-glucopyranoside + H2O = 1D-myo-inositol 2-amino-2-deoxy-alpha-D-glucopyranoside + acetate. Its function is as follows. Catalyzes the deacetylation of 1D-myo-inositol 2-acetamido-2-deoxy-alpha-D-glucopyranoside (GlcNAc-Ins) in the mycothiol biosynthesis pathway. The polypeptide is 1D-myo-inositol 2-acetamido-2-deoxy-alpha-D-glucopyranoside deacetylase (Corynebacterium kroppenstedtii (strain DSM 44385 / JCM 11950 / CIP 105744 / CCUG 35717)).